We begin with the raw amino-acid sequence, 486 residues long: Glycogen synthase 2 (486 aa).

Lysine 15 provides a ligand contact to ADP-alpha-D-glucose.

Belongs to the glycosyltransferase 1 family. Bacterial/plant glycogen synthase subfamily.

The enzyme catalyses [(1-&gt;4)-alpha-D-glucosyl](n) + ADP-alpha-D-glucose = [(1-&gt;4)-alpha-D-glucosyl](n+1) + ADP + H(+). It functions in the pathway glycan biosynthesis; glycogen biosynthesis. Functionally, synthesizes alpha-1,4-glucan chains using ADP-glucose. This chain is Glycogen synthase 2 (glgA2), found in Rhizobium meliloti (strain 1021) (Ensifer meliloti).